The chain runs to 829 residues: Periplasmic nitrate reductase (829 aa).

Residues 1–30 (MKMTRRAFVKANAAASAAAVAGITLPASAA) constitute a signal peptide (tat-type signal). Residues 41-97 (ITWDKAPCRFCGTGCSVLVGTQNGKVVATQGDPEAPVNKGLNCIKGYFLSKIMYGQD) form the 4Fe-4S Mo/W bis-MGD-type domain. Cysteine 48, cysteine 51, cysteine 55, and cysteine 83 together coordinate [4Fe-4S] cluster. Residues lysine 85, glutamine 152, asparagine 177, cysteine 181, 214–221 (WGSNMAEM), 245–249 (STYYH), 264–266 (QSD), methionine 374, glutamine 378, asparagine 484, 510–511 (SD), lysine 533, aspartate 560, and 718–727 (TGRVLEHWHT) each bind Mo-bis(molybdopterin guanine dinucleotide). A substrate-binding site is contributed by phenylalanine 794. The Mo-bis(molybdopterin guanine dinucleotide) site is built by asparagine 802 and lysine 819.

The protein belongs to the prokaryotic molybdopterin-containing oxidoreductase family. NasA/NapA/NarB subfamily. Component of the periplasmic nitrate reductase NapAB complex composed of NapA and NapB. [4Fe-4S] cluster serves as cofactor. It depends on Mo-bis(molybdopterin guanine dinucleotide) as a cofactor. Predicted to be exported by the Tat system. The position of the signal peptide cleavage has not been experimentally proven.

The protein localises to the periplasm. It catalyses the reaction 2 Fe(II)-[cytochrome] + nitrate + 2 H(+) = 2 Fe(III)-[cytochrome] + nitrite + H2O. Its function is as follows. Catalytic subunit of the periplasmic nitrate reductase complex NapAB. Receives electrons from NapB and catalyzes the reduction of nitrate to nitrite. This is Periplasmic nitrate reductase from Vibrio vulnificus (strain CMCP6).